The primary structure comprises 661 residues: UvrABC system protein B (661 aa).

Residues 25-182 form the Helicase ATP-binding domain; sequence KGLNNKKRSQ…NDLVNLQYER (158 aa). ATP is bound at residue 38–45; that stretch reads GITGSGKT. A Beta-hairpin motif is present at residues 91-114; that stretch reads YYDYYQPEAYIPKTDVFIEKDSSI. The Helicase C-terminal domain occupies 430–592; it reads QVEDLVGEIQ…IIPKTINRTI (163 aa). A UVR domain is found at 621–656; it reads KAHIDKLRKEMLKAASNLEFEQAAKLRDQLKTLEEA.

Belongs to the UvrB family. In terms of assembly, forms a heterotetramer with UvrA during the search for lesions. Interacts with UvrC in an incision complex.

Its subcellular location is the cytoplasm. Functionally, the UvrABC repair system catalyzes the recognition and processing of DNA lesions. A damage recognition complex composed of 2 UvrA and 2 UvrB subunits scans DNA for abnormalities. Upon binding of the UvrA(2)B(2) complex to a putative damaged site, the DNA wraps around one UvrB monomer. DNA wrap is dependent on ATP binding by UvrB and probably causes local melting of the DNA helix, facilitating insertion of UvrB beta-hairpin between the DNA strands. Then UvrB probes one DNA strand for the presence of a lesion. If a lesion is found the UvrA subunits dissociate and the UvrB-DNA preincision complex is formed. This complex is subsequently bound by UvrC and the second UvrB is released. If no lesion is found, the DNA wraps around the other UvrB subunit that will check the other stand for damage. This is UvrABC system protein B from Rickettsia bellii (strain OSU 85-389).